Consider the following 421-residue polypeptide: 4-hydroxy-3-methylbut-2-en-1-yl diphosphate synthase (flavodoxin) (421 aa).

[4Fe-4S] cluster contacts are provided by C311, C314, C357, and E364.

It belongs to the IspG family. The cofactor is [4Fe-4S] cluster.

The catalysed reaction is (2E)-4-hydroxy-3-methylbut-2-enyl diphosphate + oxidized [flavodoxin] + H2O + 2 H(+) = 2-C-methyl-D-erythritol 2,4-cyclic diphosphate + reduced [flavodoxin]. The protein operates within isoprenoid biosynthesis; isopentenyl diphosphate biosynthesis via DXP pathway; isopentenyl diphosphate from 1-deoxy-D-xylulose 5-phosphate: step 5/6. Functionally, converts 2C-methyl-D-erythritol 2,4-cyclodiphosphate (ME-2,4cPP) into 1-hydroxy-2-methyl-2-(E)-butenyl 4-diphosphate. In Xanthomonas oryzae pv. oryzae (strain MAFF 311018), this protein is 4-hydroxy-3-methylbut-2-en-1-yl diphosphate synthase (flavodoxin).